A 157-amino-acid chain; its full sequence is NudC domain-containing protein 2 (157 aa).

Ser-2 bears the N-acetylserine mark. The region spanning 14-104 (CGTPWGQWYQ…DAANCWTSLL (91 aa)) is the CS domain. The tract at residues 134–157 (FDFSGAEISGNYTKGGPDFSNLEK) is disordered. Ser-142 bears the Phosphoserine mark. Phosphotyrosine is present on Tyr-145.

As to quaternary structure, interacts with LIS1.

Its subcellular location is the chromosome. The protein localises to the centromere. It localises to the kinetochore. It is found in the cytoplasm. The protein resides in the cytoskeleton. Its subcellular location is the microtubule organizing center. The protein localises to the centrosome. It localises to the spindle pole. Functionally, may regulate the LIS1/dynein pathway by stabilizing LIS1 with Hsp90 chaperone. This Homo sapiens (Human) protein is NudC domain-containing protein 2 (NUDCD2).